The chain runs to 1077 residues: Error-prone DNA polymerase (1077 aa).

It belongs to the DNA polymerase type-C family. DnaE2 subfamily.

It is found in the cytoplasm. The catalysed reaction is DNA(n) + a 2'-deoxyribonucleoside 5'-triphosphate = DNA(n+1) + diphosphate. Functionally, DNA polymerase involved in damage-induced mutagenesis and translesion synthesis (TLS). It is not the major replicative DNA polymerase. In Brucella abortus biovar 1 (strain 9-941), this protein is Error-prone DNA polymerase.